A 320-amino-acid chain; its full sequence is Lipoyl synthase (320 aa).

The span at 1–24 (MIGKLVRDLKIPDQRHPEKAHRPD) shows a compositional bias: basic and acidic residues. The disordered stretch occupies residues 1–30 (MIGKLVRDLKIPDQRHPEKAHRPDNVQPKK). Positions 60, 65, 71, 86, 90, 93, and 300 each coordinate [4Fe-4S] cluster. Residues 72-289 (WSQGHATMMI…EKAAYGKGFL (218 aa)) form the Radical SAM core domain.

Belongs to the radical SAM superfamily. Lipoyl synthase family. Requires [4Fe-4S] cluster as cofactor.

It is found in the cytoplasm. It catalyses the reaction [[Fe-S] cluster scaffold protein carrying a second [4Fe-4S](2+) cluster] + N(6)-octanoyl-L-lysyl-[protein] + 2 oxidized [2Fe-2S]-[ferredoxin] + 2 S-adenosyl-L-methionine + 4 H(+) = [[Fe-S] cluster scaffold protein] + N(6)-[(R)-dihydrolipoyl]-L-lysyl-[protein] + 4 Fe(3+) + 2 hydrogen sulfide + 2 5'-deoxyadenosine + 2 L-methionine + 2 reduced [2Fe-2S]-[ferredoxin]. Its pathway is protein modification; protein lipoylation via endogenous pathway; protein N(6)-(lipoyl)lysine from octanoyl-[acyl-carrier-protein]: step 2/2. Functionally, catalyzes the radical-mediated insertion of two sulfur atoms into the C-6 and C-8 positions of the octanoyl moiety bound to the lipoyl domains of lipoate-dependent enzymes, thereby converting the octanoylated domains into lipoylated derivatives. The sequence is that of Lipoyl synthase from Cereibacter sphaeroides (strain ATCC 17029 / ATH 2.4.9) (Rhodobacter sphaeroides).